Reading from the N-terminus, the 622-residue chain is Probable potassium transport system protein Kup (622 aa).

Transmembrane regions (helical) follow at residues 8-28 (LAAL…TSVL), 50-70 (VLSV…VVLV), 100-120 (GWLL…GVIT), 137-157 (PHFG…LFAV), 169-189 (FGPV…PHIV), 203-223 (ALGF…AVVL), 247-267 (WFSV…ALLL), 285-305 (ALVP…QALI), 337-357 (IYLP…VVMF), 366-386 (AYGI…FFVI), 392-412 (YPLA…LAFF), and 419-439 (LLQG…LMMT).

Belongs to the HAK/KUP transporter (TC 2.A.72) family.

The protein resides in the cell inner membrane. The enzyme catalyses K(+)(in) + H(+)(in) = K(+)(out) + H(+)(out). Transport of potassium into the cell. Likely operates as a K(+):H(+) symporter. This Acidovorax ebreus (strain TPSY) (Diaphorobacter sp. (strain TPSY)) protein is Probable potassium transport system protein Kup.